A 259-amino-acid chain; its full sequence is Protein unc-50 homolog (259 aa).

Met1 carries the N-acetylmethionine modification. Polar residues predominate over residues Met1–Leu17. A disordered region spans residues Met1–Ala22. Over Met1–Pro82 the chain is Cytoplasmic. Ser6 carries the post-translational modification Phosphoserine. Residues Ala83–Leu103 form a helical membrane-spanning segment. The Lumenal portion of the chain corresponds to Asp104–Leu115. The chain crosses the membrane as a helical span at residues Trp116 to Ile136. Topologically, residues Ser137–Ala163 are cytoplasmic. The chain crosses the membrane as a helical span at residues Phe164–Leu184. The Lumenal segment spans residues Thr185–Thr187. A helical membrane pass occupies residues Phe188–Val208. Residues Thr209–Thr222 lie on the Cytoplasmic side of the membrane. A helical transmembrane segment spans residues Val223–Gly243. Residues Trp244–Lys259 are Lumenal-facing.

It belongs to the unc-50 family.

The protein resides in the nucleus inner membrane. Its subcellular location is the golgi apparatus membrane. Functionally, involved in the cell surface expression of neuronal nicotinic receptors. Binds RNA. This Bos taurus (Bovine) protein is Protein unc-50 homolog (UNC50).